Reading from the N-terminus, the 281-residue chain is Endonuclease III-like protein 1 (281 aa).

The transit peptide at 1–17 (MCAAAPRGGGRAARRLG) directs the protein to the mitochondrion. Positions 1 to 60 (MCAAAPRGGGRAARRLGAATAGSRVPSAAPRYSRRTRRVPIAYEAEPKPESPGPKWEPEN) are disordered. Low complexity predominate over residues 15-24 (RLGAATAGSR). The region spanning 168 to 192 (KYGGDIPGTVEELVKLPGVGPKMAH) is the HhH domain. Lys189 serves as the catalytic Nucleophile; for N-glycosylase activity. 4 residues coordinate [4Fe-4S] cluster: Cys259, Cys266, Cys269, and Cys275.

Belongs to the Nth/MutY family. Requires [4Fe-4S] cluster as cofactor.

Its subcellular location is the nucleus. The protein localises to the mitochondrion. It carries out the reaction 2'-deoxyribonucleotide-(2'-deoxyribose 5'-phosphate)-2'-deoxyribonucleotide-DNA = a 3'-end 2'-deoxyribonucleotide-(2,3-dehydro-2,3-deoxyribose 5'-phosphate)-DNA + a 5'-end 5'-phospho-2'-deoxyribonucleoside-DNA + H(+). Its function is as follows. Bifunctional DNA N-glycosylase with associated apurinic/apyrimidinic (AP) lyase function that catalyzes the first step in base excision repair (BER), the primary repair pathway for the repair of oxidative DNA damage. The DNA N-glycosylase activity releases the damaged DNA base from DNA by cleaving the N-glycosidic bond, leaving an AP site. The AP lyase activity cleaves the phosphodiester bond 3' to the AP site by a beta-elimination. Primarily recognizes and repairs oxidative base damage of pyrimidines. This is Endonuclease III-like protein 1 from Gallus gallus (Chicken).